The primary structure comprises 294 residues: ATP synthase gamma chain (294 aa).

It belongs to the ATPase gamma chain family. As to quaternary structure, F-type ATPases have 2 components, CF(1) - the catalytic core - and CF(0) - the membrane proton channel. CF(1) has five subunits: alpha(3), beta(3), gamma(1), delta(1), epsilon(1). CF(0) has three main subunits: a, b and c.

It is found in the cell inner membrane. Functionally, produces ATP from ADP in the presence of a proton gradient across the membrane. The gamma chain is believed to be important in regulating ATPase activity and the flow of protons through the CF(0) complex. In Rhizorhabdus wittichii (strain DSM 6014 / CCUG 31198 / JCM 15750 / NBRC 105917 / EY 4224 / RW1) (Sphingomonas wittichii), this protein is ATP synthase gamma chain.